Consider the following 548-residue polypeptide: Lipase 2 (548 aa).

A signal peptide spans 1-14; the sequence is MKLCLLALGAAVAA. An intrachain disulfide couples C74 to C111. S223 functions as the Acyl-ester intermediate in the catalytic mechanism. Residues C282 and C291 are joined by a disulfide bond. E355 acts as the Charge relay system in catalysis. N365 is a glycosylation site (N-linked (GlcNAc...) asparagine). H463 functions as the Charge relay system in the catalytic mechanism.

Belongs to the type-B carboxylesterase/lipase family.

It catalyses the reaction a triacylglycerol + H2O = a diacylglycerol + a fatty acid + H(+). This chain is Lipase 2 (LIP2), found in Diutina rugosa (Yeast).